Reading from the N-terminus, the 979-residue chain is Calsyntenin-1 (979 aa).

The N-terminal stretch at M1–A28 is a signal peptide. Residues A29–T859 are Extracellular-facing. Cadherin domains are found at residues L38–F164 and K165–W265. Residues N346, N366, and N515 are each glycosylated (N-linked (GlcNAc...) asparagine). A helical transmembrane segment spans residues A860–F880. The Cytoplasmic segment spans residues R881–Y979. The interval M915 to Y979 is disordered. The segment covering E925–G959 has biased composition (acidic residues).

It belongs to the calsyntenin family. In terms of assembly, directly interacts with APBA2. Forms a tripartite complex with APBA2 and APP. The CTF1 chain interacts with PSEN1. Interacts with KLC1 and APBB1. Interacts with APBB1; this interaction stabilizes AlcICD metabolism. As to quaternary structure, interacts with PSEN1. Post-translationally, proteolytically processed under normal cellular conditions. A primary zeta-cleavage generates a large extracellular (soluble) N-terminal domain (sAlc) and a short C-terminal transmembrane fragment (CTF1). A secondary cleavage catalyzed by presenilin gamma-secretase within the transmembrane domain releases the beta-Alc-alpha chain in the extracellular milieu and produces an intracellular fragment (AlcICD). Beta-Alc-alpha secretion is largely dependent upon PSEN1 and PSEN2. This processing is strongly suppressed in the tripartite complex formed with APBA2 and APP, which seems to prevent the association with PSEN1. In terms of tissue distribution, highly expressed in the brain (at protein level), with over 90% of the neurons expressing detectable amounts. In the brain, relatively high levels in the cerebral cortex, striatum, hippocampus and thalamus. Moderate levels in the cerebellum. Low levels in the olfactory bulb, midbrain and pons (at protein level). Not detected in Purkinje cells. Expressed at low levels in the lung (at protein level). At the mRNA level, weakly detected in the kidney, lung, skeletal muscle, heart and testis. Not expressed in the sciatic nerve fiber.

Its subcellular location is the postsynaptic cell membrane. The protein localises to the endoplasmic reticulum membrane. It is found in the golgi apparatus membrane. The protein resides in the cell projection. It localises to the neuron projection. Its subcellular location is the vesicle. The protein localises to the nucleus. Its function is as follows. Postsynaptic adhesion molecule that binds to presynaptic neurexins to mediate both excitatory and inhibitory synapse formation. Promotes synapse development by acting as a cell adhesion molecule at the postsynaptic membrane, which associates with neurexin-alpha at the presynaptic membrane. Also functions as a cargo in axonal anterograde transport by acting as a molecular adapter that promotes KLC1 association with vesicles. Complex formation with APBA2 and APP, stabilizes APP metabolism and enhances APBA2-mediated suppression of beta-APP40 secretion, due to the retardation of intracellular APP maturation. Functionally, as intracellular fragment AlcICD, suppresses APBB1-dependent transactivation stimulated by APP C-terminal intracellular fragment (AICD), most probably by competing with AICD for APBB1-binding. In terms of biological role, in complex with APBA2 and C99, a C-terminal APP fragment, abolishes C99 interaction with PSEN1 and thus APP C99 cleavage by gamma-secretase, most probably through stabilization of the direct interaction between APBA2 and APP. The polypeptide is Calsyntenin-1 (Mus musculus (Mouse)).